The primary structure comprises 520 residues: MTQTAHPDSVLIVDFGSQVTQLIARRVREAGVYCEIVPFQSAEEGFKRLQPKAVILSGSPASTVDEGSPRAPQIIFDSGLPVFGICYGQQTMCMQLGGKVESGHHREFGRAFLDVDKDCELFEGLWSSGSRHQVWMSHGDRVTALPDGFKVVATSSNAPFAFIADEKRKYYGVQFHPEVVHTPDGAKLIGNFIHNVAGIKGDWSMSAYRQKAVEEIRKQVGDKRVICALSGGVDSSVAALLIHEAVGDQLTCILVDHGLMRKDEAANVVAMFREHYNLHLLHVDASDRFIGELEGVSDPETKRKIIGRLFIETFEEEAKKLGGADFLGQGTLYPDVIESVSFTGGPSVTIKSHHNVGGLPERMKMQLVEPLRELFKDEVRALGRELGLPDSFIGRHPFPGPGLAIRCPGGITREKLEILREADAIYLDEIRKAGLYDAIWQAFAVLLPVQTVGVMGDGRTYEFVCALRAVTSVDGMTADFYHYDMEFLGRAATRIINEVRGINRVVYDVTSKPPGTIEWE.

Positions 9–202 (SVLIVDFGSQ…IHNVAGIKGD (194 aa)) constitute a Glutamine amidotransferase type-1 domain. The Nucleophile role is filled by cysteine 86. Active-site residues include histidine 176 and glutamate 178. The GMPS ATP-PPase domain occupies 203-395 (WSMSAYRQKA…LGLPDSFIGR (193 aa)). 230–236 (SGGVDSS) lines the ATP pocket.

As to quaternary structure, homodimer.

It catalyses the reaction XMP + L-glutamine + ATP + H2O = GMP + L-glutamate + AMP + diphosphate + 2 H(+). Its pathway is purine metabolism; GMP biosynthesis; GMP from XMP (L-Gln route): step 1/1. In terms of biological role, catalyzes the synthesis of GMP from XMP. This is GMP synthase [glutamine-hydrolyzing] from Rhizobium etli (strain ATCC 51251 / DSM 11541 / JCM 21823 / NBRC 15573 / CFN 42).